Consider the following 108-residue polypeptide: MVKIEIYYYQKKFDTDNEHAFIFGSKSYTKVYEYTDDTQTNYKDILELIFEKFNNTDNPLKSLDNQKIIRNNKLHTSMSVDDIVKIDNNYYIVDIIGFKSINTNDINQ.

This is an uncharacterized protein from Acanthamoeba polyphaga mimivirus (APMV).